Consider the following 122-residue polypeptide: Large ribosomal subunit protein uL14 (122 aa).

The protein belongs to the universal ribosomal protein uL14 family. Part of the 50S ribosomal subunit. Forms a cluster with proteins L3 and L19. In the 70S ribosome, L14 and L19 interact and together make contacts with the 16S rRNA in bridges B5 and B8.

Its function is as follows. Binds to 23S rRNA. Forms part of two intersubunit bridges in the 70S ribosome. In Methylorubrum populi (strain ATCC BAA-705 / NCIMB 13946 / BJ001) (Methylobacterium populi), this protein is Large ribosomal subunit protein uL14.